A 134-amino-acid chain; its full sequence is Small ribosomal subunit protein uS8c (134 aa).

This sequence belongs to the universal ribosomal protein uS8 family. Part of the 30S ribosomal subunit.

The protein resides in the plastid. It localises to the chloroplast. In terms of biological role, one of the primary rRNA binding proteins, it binds directly to 16S rRNA central domain where it helps coordinate assembly of the platform of the 30S subunit. The chain is Small ribosomal subunit protein uS8c (rps8) from Daucus carota (Wild carrot).